The chain runs to 422 residues: Histidine--tRNA ligase (422 aa).

The protein belongs to the class-II aminoacyl-tRNA synthetase family. As to quaternary structure, homodimer.

It localises to the cytoplasm. It catalyses the reaction tRNA(His) + L-histidine + ATP = L-histidyl-tRNA(His) + AMP + diphosphate + H(+). The chain is Histidine--tRNA ligase from Prosthecochloris aestuarii (strain DSM 271 / SK 413).